Here is a 257-residue protein sequence, read N- to C-terminus: tRNA (guanine-N(7)-)-methyltransferase (257 aa).

A compositionally biased stretch (acidic residues) spans 1-12 (MARDSEDQDMET). Residues 1–25 (MARDSEDQDMETETNGAAEGLDPTS) are disordered. Residues glycine 80, 103-104 (EI), 138-139 (NA), and leucine 158 contribute to the S-adenosyl-L-methionine site. The active site involves aspartate 161. 236-238 (SEE) contacts S-adenosyl-L-methionine.

It belongs to the class I-like SAM-binding methyltransferase superfamily. TrmB family.

It is found in the nucleus. It carries out the reaction guanosine(46) in tRNA + S-adenosyl-L-methionine = N(7)-methylguanosine(46) in tRNA + S-adenosyl-L-homocysteine. It functions in the pathway tRNA modification; N(7)-methylguanine-tRNA biosynthesis. Its function is as follows. Catalyzes the formation of N(7)-methylguanine at position 46 (m7G46) in tRNA. In Drosophila ananassae (Fruit fly), this protein is tRNA (guanine-N(7)-)-methyltransferase.